A 338-amino-acid polypeptide reads, in one-letter code: Anthranilate phosphoribosyltransferase (338 aa).

Residues Gly81, 84-85, Thr89, 91-94, 109-117, and Ala121 contribute to the 5-phospho-alpha-D-ribose 1-diphosphate site; these read GD, NIST, and KHGNRALSS. Gly81 lines the anthranilate pocket. A Mg(2+)-binding site is contributed by Ser93. An anthranilate-binding site is contributed by Asn112. Arg167 serves as a coordination point for anthranilate. Mg(2+) is bound by residues Asp225 and Glu226.

Belongs to the anthranilate phosphoribosyltransferase family. Homodimer. Requires Mg(2+) as cofactor.

The enzyme catalyses N-(5-phospho-beta-D-ribosyl)anthranilate + diphosphate = 5-phospho-alpha-D-ribose 1-diphosphate + anthranilate. The protein operates within amino-acid biosynthesis; L-tryptophan biosynthesis; L-tryptophan from chorismate: step 2/5. Its function is as follows. Catalyzes the transfer of the phosphoribosyl group of 5-phosphorylribose-1-pyrophosphate (PRPP) to anthranilate to yield N-(5'-phosphoribosyl)-anthranilate (PRA). This is Anthranilate phosphoribosyltransferase from Rhizobium johnstonii (strain DSM 114642 / LMG 32736 / 3841) (Rhizobium leguminosarum bv. viciae).